The sequence spans 254 residues: Small ribosomal subunit protein uS2 (254 aa).

The span at 228 to 248 (RKERKGQDAEEELKKASEPKA) shows a compositional bias: basic and acidic residues. A disordered region spans residues 228–254 (RKERKGQDAEEELKKASEPKAAEAAAE).

The protein belongs to the universal ribosomal protein uS2 family.

The protein is Small ribosomal subunit protein uS2 of Nitratidesulfovibrio vulgaris (strain ATCC 29579 / DSM 644 / CCUG 34227 / NCIMB 8303 / VKM B-1760 / Hildenborough) (Desulfovibrio vulgaris).